A 464-amino-acid polypeptide reads, in one-letter code: MGVSKLDILYRRLLLTKLFIRGWGRPEDLKRLFEFRKMIGNRERCQNLVSSDYPVHIDKVEEQSDCKILDGHFVSPMAHYVPGIMPIESVVARFQFIVPKEWNSRYRPVCIHLAGTGDHHYWRRRTLMARPMIKEARMASLLLENPYYGCRKPKDQVRSSLKNVSDLFVMGGALILESAALLHWLEREGYGPLGMTGISMGGHMASLAVSNWPKPMPLIPCLSWSTASGVFTTGVLSKSINWRELEKQYYTQTVYEEEIIHMLEYCGTDSFKMGHEFMNHLPSNADKLTNLNLVSRTLNLDMTDQVVSPKDAKCHKSGKTSISAPSNGQLLQDTAKMECLNQTLSTNKSWFASYNPQSFHLLNREQRRSNRQKESLIFMKGVMDECTHVANFSVPVDPSLIIVVQAKEDAYIPRTGVRSLQEIWPGCEIRYLEGGHISAYLFKQGLFRQAIYDAFERFLHKYAN.

A signal peptide spans 1–24 (MGVSKLDILYRRLLLTKLFIRGWG). A glycan (N-linked (GlcNAc...) asparagine) is linked at asparagine 341.

This sequence belongs to the AB hydrolase superfamily.

Its subcellular location is the secreted. The chain is Protein ABHD18 from Mus musculus (Mouse).